The chain runs to 452 residues: Diphthine methyltransferase (452 aa).

WD repeat units follow at residues 79-130 (PLVE…SHVL), 131-185 (EPLS…RPRL), 186-229 (QKVA…RVPG), 230-273 (KFLF…RNMK), 274-313 (QPLA…LNCQ), 314-403 (KAME…TEGM), and 404-448 (RKNG…HLWE). Phosphoserine is present on serine 353. Positions 371–402 (SELPTPCHECREDNDGEGHARPQSGMKPLTEG) are disordered. A compositionally biased stretch (basic and acidic residues) spans 378 to 390 (HECREDNDGEGHA).

Belongs to the DPH7 family. As to quaternary structure, interacts with INCA1.

The catalysed reaction is diphthine methyl ester-[translation elongation factor 2] + H2O = diphthine-[translation elongation factor 2] + methanol + H(+). It functions in the pathway protein modification; peptidyl-diphthamide biosynthesis. Its function is as follows. Catalyzes the demethylation of diphthine methyl ester to form diphthine, an intermediate diphthamide biosynthesis, a post-translational modification of histidine which occurs in translation elongation factor 2 (EEF2) which can be ADP-ribosylated by diphtheria toxin and by Pseudomonas exotoxin A (Eta). In Homo sapiens (Human), this protein is Diphthine methyltransferase (DPH7).